Reading from the N-terminus, the 393-residue chain is Beta-ureidopropionase (393 aa).

The CN hydrolase domain occupies 72 to 344; that stretch reads VRVGLVQNRI…DGLLVTELNL (273 aa). Residue Glu119 is the Proton acceptor of the active site. Lys196 serves as the catalytic Proton donor. Cys233 (nucleophile) is an active-site residue. At Ser378 the chain carries Phosphoserine.

This sequence belongs to the carbon-nitrogen hydrolase superfamily. BUP family. In terms of assembly, homodimer, homotetramer, homooctamer; can also form higher homooligomers.

It is found in the cytoplasm. It catalyses the reaction 3-(carbamoylamino)propanoate + H2O + 2 H(+) = beta-alanine + NH4(+) + CO2. The catalysed reaction is 3-(carbamoylamino)-2-methylpropanoate + H2O + 2 H(+) = (R)-3-amino-2-methylpropanoate + NH4(+) + CO2. It functions in the pathway amino-acid biosynthesis; beta-alanine biosynthesis. Catalyzes a late step in pyrimidine degradation. Converts N-carbamoyl-beta-alanine (3-ureidopropanoate) into beta-alanine, ammonia and carbon dioxide. Likewise, converts N-carbamoyl-beta-aminoisobutyrate (3-ureidoisobutyrate) into beta-aminoisobutyrate, ammonia and carbon dioxide. In Mus musculus (Mouse), this protein is Beta-ureidopropionase (Upb1).